Reading from the N-terminus, the 295-residue chain is Calcium-regulated actin-bundling protein (295 aa).

Monomer.

May contribute to the structure and reorganization of filopodia and pseudopodia accompanying cell movements. The sequence is that of Calcium-regulated actin-bundling protein (abpB) from Dictyostelium discoideum (Social amoeba).